Here is a 103-residue protein sequence, read N- to C-terminus: Large ribosomal subunit protein bL21 (103 aa).

It belongs to the bacterial ribosomal protein bL21 family. Part of the 50S ribosomal subunit. Contacts protein L20.

Its function is as follows. This protein binds to 23S rRNA in the presence of protein L20. In Methylibium petroleiphilum (strain ATCC BAA-1232 / LMG 22953 / PM1), this protein is Large ribosomal subunit protein bL21.